A 1079-amino-acid chain; its full sequence is Psi-producing oxygenase A (1079 aa).

Residues 105–446 form a linoleate 8R-lipoxygenase region; that stretch reads TNTFLTTLWN…DGSYDDNDLV (342 aa). Position 202 (H202) interacts with heme b. Y374 is a catalytic residue. H377 contributes to the heme b binding site. Positions 654-1079 are 9,12-octadecadienoate 8-hydroperoxide 8R-isomerase; it reads QFINSHSACM…WDGDLPEVKE (426 aa).

This sequence belongs to the peroxidase family. Homotetramer. It depends on heme b as a cofactor.

It catalyses the reaction (9Z,12Z)-octadecadienoate + O2 = (8R,9Z,12Z)-8-hydroperoxyoctadeca-9,12-dienoate. The catalysed reaction is (8R,9Z,12Z)-8-hydroperoxyoctadeca-9,12-dienoate = (5S,8R,9Z,12Z)-5,8-dihydroxyoctadeca-9,12-dienoate. In terms of biological role, bifunctional heme-containing enzyme that oxidizes linoleic acid to (8R,9Z,12Z)-8-hydroperoxyoctadeca-9,12-dienoate (within the N-terminal heme peroxidase domain), which is subsequently isomerized to (5S,8R,9Z,12Z)-5,8-dihydroxyoctadeca-9,12-dienoate (within the C-terminal P450 heme thiolate domain). Oxidized unsaturated fatty acids, so-called oxylipins, derived from endogenous fatty acids, influence the development of the asexual conidiophores and sexual cleistothecia and regulate the secondary metabolism. These substances were collectively named psi factors and are primarily a mixture of hydroxylated oleic, linoleic and alpha-linolenic acids. They are termed psi-beta, psi-alpha, and psi-gamma, respectively. Oxylipins may also serve as activators of mammalian immune responses contributing to enhanced resistance to opportunistic fungi and as factors that modulate fungal development contributing to resistance to host defenses. In Aspergillus fumigatus (strain ATCC MYA-4609 / CBS 101355 / FGSC A1100 / Af293) (Neosartorya fumigata), this protein is Psi-producing oxygenase A (ppoA).